The chain runs to 206 residues: tRNA (guanine-N(7)-)-methyltransferase (206 aa).

Positions 37, 62, 89, and 112 each coordinate S-adenosyl-L-methionine. D112 is an active-site residue. Substrate-binding residues include K116 and D148.

This sequence belongs to the class I-like SAM-binding methyltransferase superfamily. TrmB family.

The catalysed reaction is guanosine(46) in tRNA + S-adenosyl-L-methionine = N(7)-methylguanosine(46) in tRNA + S-adenosyl-L-homocysteine. The protein operates within tRNA modification; N(7)-methylguanine-tRNA biosynthesis. In terms of biological role, catalyzes the formation of N(7)-methylguanine at position 46 (m7G46) in tRNA. The protein is tRNA (guanine-N(7)-)-methyltransferase of Myxococcus xanthus (strain DK1622).